The following is a 403-amino-acid chain: Glyceraldehyde-3-phosphate dehydrogenase A, chloroplastic (403 aa).

The transit peptide at 1–66 directs the protein to the chloroplast; the sequence is MASSMLSATT…GGPRRAPTEA (66 aa). Residues 77–78, D102, and R147 contribute to the NADP(+) site; that span reads RI. D-glyceraldehyde 3-phosphate-binding positions include 219–221, T250, R265, 278–279, and R301; these read SCT and TG. The active-site Nucleophile is the C220. N383 serves as a coordination point for NADP(+).

Belongs to the glyceraldehyde-3-phosphate dehydrogenase family. Tetramer of either four A chains (GAPDH 2) or two A and two B chains (GAPDH 1).

It is found in the plastid. It localises to the chloroplast. It carries out the reaction D-glyceraldehyde 3-phosphate + phosphate + NADP(+) = (2R)-3-phospho-glyceroyl phosphate + NADPH + H(+). It functions in the pathway carbohydrate biosynthesis; Calvin cycle. The sequence is that of Glyceraldehyde-3-phosphate dehydrogenase A, chloroplastic (GAPA) from Zea mays (Maize).